Reading from the N-terminus, the 369-residue chain is Chaperone protein DnaJ (369 aa).

Residues 4 to 69 form the J domain; it reads SYYEILEVEK…KKRALYDRYG (66 aa). A CR-type zinc finger spans residues 130-207; sequence GCKKTIKVQY…CKGKTYILKD (78 aa). 8 residues coordinate Zn(2+): Cys-143, Cys-146, Cys-159, Cys-162, Cys-181, Cys-184, Cys-195, and Cys-198. 4 CXXCXGXG motif repeats span residues 143 to 150, 159 to 166, 181 to 188, and 195 to 202; these read CESCDGTG, CKQCNGQG, CGACQGKG, and CQACKGKT.

It belongs to the DnaJ family. As to quaternary structure, homodimer. Zn(2+) is required as a cofactor.

It localises to the cytoplasm. Participates actively in the response to hyperosmotic and heat shock by preventing the aggregation of stress-denatured proteins and by disaggregating proteins, also in an autonomous, DnaK-independent fashion. Unfolded proteins bind initially to DnaJ; upon interaction with the DnaJ-bound protein, DnaK hydrolyzes its bound ATP, resulting in the formation of a stable complex. GrpE releases ADP from DnaK; ATP binding to DnaK triggers the release of the substrate protein, thus completing the reaction cycle. Several rounds of ATP-dependent interactions between DnaJ, DnaK and GrpE are required for fully efficient folding. Also involved, together with DnaK and GrpE, in the DNA replication of plasmids through activation of initiation proteins. This is Chaperone protein DnaJ from Helicobacter pylori (strain ATCC 700392 / 26695) (Campylobacter pylori).